A 336-amino-acid chain; its full sequence is HTH-type transcriptional regulator CdhR (336 aa).

The 99-residue stretch at 213–311 (VQVIGEMERH…AASPSQDRAV (99 aa)) folds into the HTH araC/xylS-type domain. DNA-binding regions (H-T-H motif) lie at residues 230–251 (LELA…RVHL) and 278–301 (VLQV…RARF). The tract at residues 305 to 336 (PSQDRAVLPLKAPAATPPGAPAGHRTPRAERG) is disordered.

Functionally, induces the transcription of the PA5384-PA5388 operon in response to carnitine. This operon is involved in the degradation of L-carnitine, and allows P.aeruginosa to grow on L-carnitine as the sole source of carbon and nitrogen. In Pseudomonas aeruginosa (strain ATCC 15692 / DSM 22644 / CIP 104116 / JCM 14847 / LMG 12228 / 1C / PRS 101 / PAO1), this protein is HTH-type transcriptional regulator CdhR (cdhR).